A 252-amino-acid chain; its full sequence is MLSATQPVSENLPAHGCRHVAIIMDGNGRWAKKQGKIRAFGHKAGAKSVRRAVSFAANNGIDALTLYAFSSENWNRPAQEVSALMELFVWALDSEVKSLHRHNVRLRIIGDISRFNSRLQERIRKSEALTAHNTGLTLNIAANYGGRWDIVQGVRQLAELVQAGVLRPDQIDEERLGQQICMHELAPVDLVIRTGGEHRISNFLLWQIAYAELYFTDVLWPDFDEQDFEGALHAFANRERRFGGTEPGDDKA.

D25 is an active-site residue. D25 provides a ligand contact to Mg(2+). Substrate is bound by residues 26-29 (GNGR), W30, R38, H42, and 70-72 (SSE). Residue N73 is the Proton acceptor of the active site. 3 residues coordinate substrate: W74, R76, and R193. H198 provides a ligand contact to Mg(2+). 199–201 (RIS) is a binding site for substrate. E212 serves as a coordination point for Mg(2+).

The protein belongs to the UPP synthase family. Homodimer. Mg(2+) serves as cofactor.

It catalyses the reaction 8 isopentenyl diphosphate + (2E,6E)-farnesyl diphosphate = di-trans,octa-cis-undecaprenyl diphosphate + 8 diphosphate. Catalyzes the sequential condensation of isopentenyl diphosphate (IPP) with (2E,6E)-farnesyl diphosphate (E,E-FPP) to yield (2Z,6Z,10Z,14Z,18Z,22Z,26Z,30Z,34E,38E)-undecaprenyl diphosphate (di-trans,octa-cis-UPP). UPP is the precursor of glycosyl carrier lipid in the biosynthesis of bacterial cell wall polysaccharide components such as peptidoglycan and lipopolysaccharide. In Salmonella typhi, this protein is Ditrans,polycis-undecaprenyl-diphosphate synthase ((2E,6E)-farnesyl-diphosphate specific).